The following is a 1489-amino-acid chain: Chromosome partition protein MukB (1489 aa).

Position 34–41 (34–41 (GGNGAGKS)) interacts with ATP. Coiled coils occupy residues 326-418 (LEAD…QYNQ), 444-472 (LETF…QTAH), 509-602 (RHLA…QRAP), 780-805 (RAAR…ATLS), 835-919 (EAEI…GNQL), 977-1116 (EMLS…AKAG), and 1209-1266 (VEAI…QNVS). The flexible hinge stretch occupies residues 666–783 (PGGSEDSRLN…TVPIFGRAAR (118 aa)).

Belongs to the SMC family. MukB subfamily. Homodimerization via its hinge domain. Binds to DNA via its C-terminal region. Interacts, and probably forms a ternary complex, with MukE and MukF via its C-terminal region. The complex formation is stimulated by calcium or magnesium. Interacts with tubulin-related protein FtsZ.

It localises to the cytoplasm. The protein localises to the nucleoid. Plays a central role in chromosome condensation, segregation and cell cycle progression. Functions as a homodimer, which is essential for chromosome partition. Involved in negative DNA supercoiling in vivo, and by this means organize and compact chromosomes. May achieve or facilitate chromosome segregation by condensation DNA from both sides of a centrally located replisome during cell division. This is Chromosome partition protein MukB from Citrobacter koseri (strain ATCC BAA-895 / CDC 4225-83 / SGSC4696).